The chain runs to 768 residues: Mitochondrial 15S rRNA processing factor CCM1 (768 aa).

The transit peptide at 1-90 (MIRLIRWNNV…RSFTKVIAQH (90 aa)) directs the protein to the mitochondrion. Disordered regions lie at residues 28–65 (NKRK…NTGS) and 90–114 (HLKP…LPPI). Basic and acidic residues predominate over residues 43-53 (NRKDGDIEPYR). Polar residues predominate over residues 55–65 (TDQNQTPNTGS). PPR repeat units follow at residues 274 to 308 (KIDH…NIEI), 309 to 344 (SKMI…SQKT), 347 to 381 (DEKV…GMNV), 382 to 417 (NQNL…GWVP), and 418 to 452 (NLQT…NSVT). The segment covering 583 to 596 (IEPRQDEPTEKATT) has biased composition (basic and acidic residues). Residues 583–609 (IEPRQDEPTEKATTTEEQNASSETDNN) are disordered. Over residues 597 to 609 (TEEQNASSETDNN) the composition is skewed to polar residues. A PPR 6 repeat occupies 634-664 (DSYLYNLAIKAAGKFKNYGFAQEILHERGQF).

The protein belongs to the CCM1 family. Binds to mitochondrial small subunit 15S rRNA.

The protein localises to the mitochondrion. In terms of biological role, regulates mitochondrial small subunit maturation by controlling 15S rRNA 5'-end processing. Localizes to the 5' precursor of the 15S rRNA in a position that is subsequently occupied by mS47 in the mature yeast mtSSU. Uses structure and sequence-specific RNA recognition, binding to a single-stranded region of the precursor and specifically recognizing bases -6 to -1. The exchange of Ccm1 for mS47 is coupled to the irreversible removal of precursor rRNA that is accompanied by conformational changes of the mitoribosomal proteins uS5m and mS26. These conformational changes signal completion of 5'-end rRNA processing through protection of the mature 5'-end of the 15S rRNA and stabilization of mS47. The removal of the 5' precursor together with the dissociation of Ccm1 may be catalyzed by the 5'-3' exoribonuclease Pet127. Involved in the specific removal of group I introns in mitochondrial encoded transcripts. This Candida albicans (strain SC5314 / ATCC MYA-2876) (Yeast) protein is Mitochondrial 15S rRNA processing factor CCM1 (CCM1).